A 130-amino-acid chain; its full sequence is uncharacterized protein (130 aa).

Disordered stretches follow at residues 1-47 (MTFY…QSNT) and 78-130 (QTLE…SESS). A compositionally biased stretch (polar residues) spans 13–33 (QWKQLQTQQNKKNSPRPVTSS). Residues 86-110 (PSKHKRKRTKYRRTKKSKHHSRKKT) are compositionally biased toward basic residues. A compositionally biased stretch (basic and acidic residues) spans 117-130 (SERDSTTGRESESS).

This is an uncharacterized protein from Torque teno mini virus 1 (isolate TLMV-CBD279).